Consider the following 341-residue polypeptide: 2-acylglycerol O-acyltransferase 3 (341 aa).

A run of 2 helical transmembrane segments spans residues tyrosine 29 to phenylalanine 49 and threonine 50 to proline 70. The N-linked (GlcNAc...) asparagine glycan is linked to asparagine 126. The chain crosses the membrane as a helical span at residues leucine 137–tyrosine 157.

This sequence belongs to the diacylglycerol acyltransferase family. Post-translationally, ubiquitinated. Ubiquitination leads to proteasomal degradation. As to expression, selectively expressed in the digestive system. Highly expressed in the ileum, and at lower level in jejunum, duodenum, colon, cecum and the rectum. Not expressed in the stomach and the esophagus and trachea. Expressed at very low level in liver.

Its subcellular location is the endoplasmic reticulum membrane. It is found in the cytoplasm. The protein localises to the perinuclear region. It catalyses the reaction a 2-acylglycerol + an acyl-CoA = a 1,2-diacylglycerol + CoA. The catalysed reaction is an acyl-CoA + a 1,2-diacyl-sn-glycerol = a triacyl-sn-glycerol + CoA. The enzyme catalyses 2-(9Z-octadecenoyl)-glycerol + (9Z)-octadecenoyl-CoA = 1,2-di-(9Z-octadecenoyl)-sn-glycerol + CoA. It carries out the reaction 2-(9Z-octadecenoyl)-glycerol + hexadecanoyl-CoA = 1-hexadecanoyl-2-(9Z-octadecenoyl)-sn-glycerol + CoA. It catalyses the reaction 1,2-di-(9Z-octadecenoyl)-sn-glycerol + (9Z)-octadecenoyl-CoA = 1,2,3-tri-(9Z-octadecenoyl)-glycerol + CoA. The catalysed reaction is 1-hexadecanoyl-2-(9Z-octadecenoyl)-sn-glycerol + hexadecanoyl-CoA = 1,3-dihexadecanoyl-2-(9Z-octadecenoyl)glycerol + CoA. The enzyme catalyses all-trans-retinol + hexadecanoyl-CoA = all-trans-retinyl hexadecanoate + CoA. It carries out the reaction 1-O-(9Z-octadecenyl)-glycerol + (9Z)-octadecenoyl-CoA = 1-O-(9Z-octadecyl)-3-(9Z-octadecenoyl)-glycerol + CoA. It catalyses the reaction 1-O-(9Z-octadecyl)-3-(9Z-octadecenoyl)-glycerol + (9Z)-octadecenoyl-CoA = 1-O-(9Z-octadecenyl)-2,3-di-(9Z-octadecenoyl)glycerol + CoA. It participates in glycerolipid metabolism; triacylglycerol biosynthesis. Catalyzes the formation of diacylglycerol from 2-monoacylglycerol and fatty acyl-CoA. Also able to catalyze the terminal step in triacylglycerol synthesis by using diacylglycerol and fatty acyl-CoA as substrates. Has a preference toward palmitoyl-CoA and oleoyl-CoA. May be involved in absorption of dietary fat in the small intestine by catalyzing the resynthesis of triacylglycerol in enterocytes. Also able to use 1-monoalkylglycerol (1-MAkG) as an acyl acceptor for the synthesis of monoalkyl-monoacylglycerol (MAMAG). In Homo sapiens (Human), this protein is 2-acylglycerol O-acyltransferase 3.